The following is a 233-amino-acid chain: Chalcone--flavanone isomerase (233 aa).

Substrate-binding residues include T47, N113, and S192.

The protein belongs to the chalcone isomerase family.

The catalysed reaction is a chalcone = a flavanone.. Its pathway is secondary metabolite biosynthesis; flavonoid biosynthesis. Its function is as follows. Catalyzes the intramolecular cyclization of bicyclic chalcones into tricyclic (S)-flavanones. Responsible for the isomerization of 4,2',4',6'-tetrahydroxychalcone (also termed chalcone) into naringenin. This is Chalcone--flavanone isomerase (CHI) from Oryza sativa subsp. japonica (Rice).